The chain runs to 132 residues: HLA class I histocompatibility antigen protein P5 (132 aa).

In terms of tissue distribution, expressed in lymphoid tissues; Detected in spleen as well as in B-cell lines, NK cell lines and activated lymphocytes.

The protein is HLA class I histocompatibility antigen protein P5 (HCP5) of Homo sapiens (Human).